The following is a 453-amino-acid chain: Tubulin delta chain (453 aa).

143–149 (AGGTGSG) lines the GTP pocket.

Belongs to the tubulin family. In terms of assembly, found in a complex with TEDC1, TEDC2, TUBE1 and TUBD1.

It is found in the nucleus. The protein localises to the cytoplasm. Its subcellular location is the cytoskeleton. It localises to the microtubule organizing center. The protein resides in the centrosome. It is found in the centriole. The protein localises to the cell projection. Its subcellular location is the cilium. Its function is as follows. Acts as a positive regulator of hedgehog signaling and regulates ciliary function. The sequence is that of Tubulin delta chain (TUBD1) from Homo sapiens (Human).